Here is a 233-residue protein sequence, read N- to C-terminus: Leucyl/phenylalanyl-tRNA--protein transferase (233 aa).

The protein belongs to the L/F-transferase family.

Its subcellular location is the cytoplasm. It carries out the reaction N-terminal L-lysyl-[protein] + L-leucyl-tRNA(Leu) = N-terminal L-leucyl-L-lysyl-[protein] + tRNA(Leu) + H(+). The catalysed reaction is N-terminal L-arginyl-[protein] + L-leucyl-tRNA(Leu) = N-terminal L-leucyl-L-arginyl-[protein] + tRNA(Leu) + H(+). It catalyses the reaction L-phenylalanyl-tRNA(Phe) + an N-terminal L-alpha-aminoacyl-[protein] = an N-terminal L-phenylalanyl-L-alpha-aminoacyl-[protein] + tRNA(Phe). Functions in the N-end rule pathway of protein degradation where it conjugates Leu, Phe and, less efficiently, Met from aminoacyl-tRNAs to the N-termini of proteins containing an N-terminal arginine or lysine. This chain is Leucyl/phenylalanyl-tRNA--protein transferase, found in Desulfatibacillum aliphaticivorans.